A 75-amino-acid chain; its full sequence is MKLLFFTALVLVVISLIEVEAENERACIPLEKECTKTPGNCCSGLKCDCYRRFEQGVAKGIQCWCIEKDVTYKGV.

A signal peptide spans 1-21; the sequence is MKLLFFTALVLVVISLIEVEA. Positions 22-25 are excised as a propeptide; the sequence is ENER.

It belongs to the neurotoxin 19 (CSTX) family. 06 (U6-Lctx) subfamily. Contains 4 disulfide bonds. In terms of tissue distribution, expressed by the venom gland.

It is found in the secreted. The polypeptide is U6-lycotoxin-Ls1d (Lycosa singoriensis (Wolf spider)).